The following is a 326-amino-acid chain: Tetraacyldisaccharide 4'-kinase (326 aa).

Position 55–62 (55–62) interacts with ATP; sequence TVGGNGKT.

The protein belongs to the LpxK family.

The enzyme catalyses a lipid A disaccharide + ATP = a lipid IVA + ADP + H(+). It participates in glycolipid biosynthesis; lipid IV(A) biosynthesis; lipid IV(A) from (3R)-3-hydroxytetradecanoyl-[acyl-carrier-protein] and UDP-N-acetyl-alpha-D-glucosamine: step 6/6. In terms of biological role, transfers the gamma-phosphate of ATP to the 4'-position of a tetraacyldisaccharide 1-phosphate intermediate (termed DS-1-P) to form tetraacyldisaccharide 1,4'-bis-phosphate (lipid IVA). This Tolumonas auensis (strain DSM 9187 / NBRC 110442 / TA 4) protein is Tetraacyldisaccharide 4'-kinase.